The sequence spans 433 residues: Trigger factor (433 aa).

Positions 161 to 246 constitute a PPIase FKBP-type domain; that stretch reads EDRVVIDFVG…LKKVENIVLP (86 aa).

This sequence belongs to the FKBP-type PPIase family. Tig subfamily.

It localises to the cytoplasm. The enzyme catalyses [protein]-peptidylproline (omega=180) = [protein]-peptidylproline (omega=0). Functionally, involved in protein export. Acts as a chaperone by maintaining the newly synthesized protein in an open conformation. Functions as a peptidyl-prolyl cis-trans isomerase. The chain is Trigger factor from Actinobacillus pleuropneumoniae serotype 5b (strain L20).